A 346-amino-acid polypeptide reads, in one-letter code: Phosphoribosylformylglycinamidine cyclo-ligase (346 aa).

Belongs to the AIR synthase family.

The protein resides in the cytoplasm. The catalysed reaction is 2-formamido-N(1)-(5-O-phospho-beta-D-ribosyl)acetamidine + ATP = 5-amino-1-(5-phospho-beta-D-ribosyl)imidazole + ADP + phosphate + H(+). The protein operates within purine metabolism; IMP biosynthesis via de novo pathway; 5-amino-1-(5-phospho-D-ribosyl)imidazole from N(2)-formyl-N(1)-(5-phospho-D-ribosyl)glycinamide: step 2/2. This is Phosphoribosylformylglycinamidine cyclo-ligase from Synechococcus sp. (strain CC9311).